A 462-amino-acid chain; its full sequence is Glutamate--tRNA ligase (462 aa).

A 'HIGH' region motif is present at residues 11 to 21; that stretch reads PSPTGFIHLGN. A compositionally biased stretch (basic and acidic residues) spans 120 to 131; the sequence is KPRYDGTWRPEP. Residues 120 to 140 form a disordered region; it reads KPRYDGTWRPEPGKTLPPIPA. A 'KMSKS' region motif is present at residues 243 to 247; it reads KMSKR. Residue K246 participates in ATP binding.

The protein belongs to the class-I aminoacyl-tRNA synthetase family. Glutamate--tRNA ligase type 1 subfamily. In terms of assembly, monomer.

It is found in the cytoplasm. It carries out the reaction tRNA(Glu) + L-glutamate + ATP = L-glutamyl-tRNA(Glu) + AMP + diphosphate. Functionally, catalyzes the attachment of glutamate to tRNA(Glu) in a two-step reaction: glutamate is first activated by ATP to form Glu-AMP and then transferred to the acceptor end of tRNA(Glu). The polypeptide is Glutamate--tRNA ligase (Polaromonas sp. (strain JS666 / ATCC BAA-500)).